The following is a 166-amino-acid chain: MASGVAVSDGVIKVFNDMKVRKSSTPEEVKKRKKAVLFCLSEDKKNIILEEGKEILVGDVGQTVDDPYATFVKMLPDKDCRYALYDATYETKESKKEDLVFIFWAPECAPLKSKMIYASSKDAIKKKLTGIKHELQANCYEEVKDRCTLAEKLGGSAVISLEGKPL.

Ala-2 is subject to N-acetylalanine. Residues Ser-3 and Ser-8 each carry the phosphoserine modification. The 150-residue stretch at 4–153 (GVAVSDGVIK…KDRCTLAEKL (150 aa)) folds into the ADF-H domain. Lys-13 carries the N6-acetyllysine modification. Residue Thr-25 is modified to Phosphothreonine. A Nuclear localization signal motif is present at residues 30 to 34 (KKRKK). Position 41 is a phosphoserine (Ser-41). Tyr-68 is subject to Phosphotyrosine. An N6-acetyllysine modification is found at Lys-73. A Glycyl lysine isopeptide (Lys-Gly) (interchain with G-Cter in SUMO2) cross-link involves residue Lys-132. The residue at position 140 (Tyr-140) is a Phosphotyrosine. Residue Lys-144 is modified to N6-acetyllysine. Phosphoserine is present on Ser-156.

It belongs to the actin-binding proteins ADF family. Can bind G- and F-actin in a 1:1 ratio of cofilin to actin. It is a major component of intranuclear and cytoplasmic actin rods. Interacts with the subcortical maternal complex (SCMC) via interaction with TLE6 and NLRP5. Interacts with C9orf72. Post-translationally, inactivated by phosphorylation on Ser-3. Phosphorylated on Ser-3 in resting cells. Dephosphorylated by PDXP/chronophin; this restores its activity in promoting actin filament depolymerization. The phosphorylation of Ser-24 may prevent recognition of the nuclear localization signal. Phosphorylated via a ARRB1-RAC1-LIMK1-PAK1 cascade upon active ligand stimulation of atypical chemokine receptor ACKR2.

The protein resides in the nucleus matrix. Its subcellular location is the cytoplasm. It is found in the cytoskeleton. It localises to the cell projection. The protein localises to the ruffle membrane. The protein resides in the lamellipodium membrane. Its subcellular location is the lamellipodium. It is found in the growth cone. It localises to the axon. In terms of biological role, binds to F-actin and exhibits pH-sensitive F-actin depolymerizing activity. Important for normal progress through mitosis and normal cytokinesis. In conjunction with the subcortical maternal complex (SCMC), plays an essential role for zygotes to progress beyond the first embryonic cell divisions via regulation of actin dynamics. Required for the centralization of the mitotic spindle and symmetric division of zygotes. Plays a role in the regulation of cell morphology and cytoskeletal organization in epithelial cells. Required for the up-regulation of atypical chemokine receptor ACKR2 from endosomal compartment to cell membrane, increasing its efficiency in chemokine uptake and degradation. Required for neural tube morphogenesis and neural crest cell migration. This Bos taurus (Bovine) protein is Cofilin-1 (CFL1).